The following is a 474-amino-acid chain: MFS transporter SAT21 (474 aa).

6 helical membrane passes run 7–27 (LVLP…LEVP), 64–84 (LVVG…ILYF), 101–121 (CVGY…HQVF), 131–151 (LFLF…AFVA), 162–182 (FLFL…ALAT), and 189–209 (LFLP…LLQM). Residues 220 to 252 (KVVGSTSDQTEPFLRSSSNSSQESGTAAPAIDP) form a disordered region. The span at 222–244 (VGSTSDQTEPFLRSSSNSSQESG) shows a compositional bias: polar residues. The N-linked (GlcNAc...) asparagine glycan is linked to Asn-238. A run of 6 helical transmembrane segments spans residues 276–296 (FICY…AFIF), 315–335 (LALS…ANAT), 346–366 (INIG…IMAW), 374–394 (FIFS…LQGV), 406–426 (SIFA…GPLM), and 445–465 (FLAS…LWAL).

This sequence belongs to the major facilitator superfamily.

Its subcellular location is the cell membrane. Functionally, MFS transporter; part of the satratoxin SC3 cluster involved in the biosynthesis of satratoxins, trichothecene mycotoxins that are associated with human food poisonings. Satratoxins are suggested to be made by products of multiple gene clusters (SC1, SC2 and SC3) that encode 21 proteins in all, including polyketide synthases, acetyltransferases, and other enzymes expected to modify the trichothecene skeleton. SC1 encodes 10 proteins, SAT1 to SAT10. The largest are SAT8, which encodes a putative polyketide synthase (PKS) with a conventional non-reducing architecture, and SAT10, a putative protein containing four ankyrin repeats and thus may be involved in protein scaffolding. The putative short-chain reductase SAT3 may assist the PKS in some capacity. SAT6 contains a secretory lipase domain and acts probably as a trichothecene esterase. SAT5 encodes a putative acetyltransferase, and so, with SAT6, may affect endogenous protection from toxicity. The probable transcription factor SAT9 may regulate the expression of the SC1 cluster. SC2 encodes proteins SAT11 to SAT16, the largest of which encodes the putative reducing PKS SAT13. SAT11 is a cytochrome P450 monooxygenase, while SAT14 and SAT16 are probable acetyltransferases. The SC2 cluster may be regulated by the transcription factor SAT15. SC3 is a small cluster that encodes 5 proteins, SAT17 to SAT21. SAT21 is a putative MFS-type transporter which may have a role in exporting secondary metabolites. The four other proteins putatively encoded in SC3 include the taurine hydroxylase-like protein SAT17, the O-methyltransferase SAT18, the acetyltransferase SAT19, and the Cys6-type zinc finger SAT20, the latter being probably involved in regulation of SC3 expression. This is MFS transporter SAT21 from Stachybotrys chartarum (strain CBS 109288 / IBT 7711) (Toxic black mold).